The following is a 101-amino-acid chain: Small ribosomal subunit protein uS14A (101 aa).

Disordered regions lie at residues 1–20 (MAKK…VARY) and 28–72 (TEII…RPRG). Basic and acidic residues-rich tracts occupy residues 38–53 (EAER…RQPR) and 61–70 (RNRDSVDGRP).

This sequence belongs to the universal ribosomal protein uS14 family. In terms of assembly, part of the 30S ribosomal subunit. Contacts proteins S3 and S10.

In terms of biological role, binds 16S rRNA, required for the assembly of 30S particles and may also be responsible for determining the conformation of the 16S rRNA at the A site. This is Small ribosomal subunit protein uS14A from Streptomyces avermitilis (strain ATCC 31267 / DSM 46492 / JCM 5070 / NBRC 14893 / NCIMB 12804 / NRRL 8165 / MA-4680).